Here is a 146-residue protein sequence, read N- to C-terminus: Globin-1 (146 aa).

Residues Gln-9–Leu-146 form the Globin domain. His-101 contacts heme b.

Belongs to the globin family. As to quaternary structure, homodimer.

It localises to the cytoplasm. This Anadara inaequivalvis (Inequivalve ark) protein is Globin-1.